The sequence spans 1070 residues: DNA-directed RNA polymerase subunit beta (1070 aa).

Belongs to the RNA polymerase beta chain family. In plastids the minimal PEP RNA polymerase catalytic core is composed of four subunits: alpha, beta, beta', and beta''. When a (nuclear-encoded) sigma factor is associated with the core the holoenzyme is formed, which can initiate transcription.

Its subcellular location is the plastid. It is found in the chloroplast. The catalysed reaction is RNA(n) + a ribonucleoside 5'-triphosphate = RNA(n+1) + diphosphate. Functionally, DNA-dependent RNA polymerase catalyzes the transcription of DNA into RNA using the four ribonucleoside triphosphates as substrates. The protein is DNA-directed RNA polymerase subunit beta of Cucumis sativus (Cucumber).